Reading from the N-terminus, the 999-residue chain is Tyrosine-protein kinase Mer (999 aa).

Positions 1–20 are cleaved as a signal peptide; that stretch reads MGPAPLPLLLGLFLPALWRR. Residues 21–505 are Extracellular-facing; it reads AITEAREEAK…PGNADPVLII (485 aa). Ig-like C2-type domains are found at residues 81 to 186 and 197 to 273; these read PQVT…EIVS and PHFT…LTVS. N-linked (GlcNAc...) asparagine glycans are attached at residues asparagine 114, asparagine 170, asparagine 207, asparagine 215, asparagine 234, asparagine 294, asparagine 316, asparagine 329, asparagine 336, asparagine 354, asparagine 389, asparagine 395, asparagine 442, and asparagine 454. A disulfide bridge connects residues cysteine 115 and cysteine 175. A disulfide bridge connects residues cysteine 218 and cysteine 262. Fibronectin type-III domains are found at residues 286 to 381 and 386 to 484; these read PPTE…TTEG and APLN…PAHG. Residues 506–526 traverse the membrane as a helical segment; that stretch reads FGCFCGFILIGLILYISLAIR. At 527-999 the chain is on the cytoplasmic side; sequence KRVQETKFGN…DSSEGSEVLM (473 aa). Serine 543 is subject to Phosphoserine. The 272-residue stretch at 587–858 folds into the Protein kinase domain; that stretch reads LILGKILGEG…VLRLQLEKLL (272 aa). ATP-binding positions include 593-601 and lysine 615; that span reads LGEGEFGSV. Aspartate 723 (proton acceptor) is an active-site residue. Residues tyrosine 749, tyrosine 753, tyrosine 754, and tyrosine 872 each carry the phosphotyrosine; by autocatalysis modification. Phosphoserine is present on serine 935.

This sequence belongs to the protein kinase superfamily. Tyr protein kinase family. AXL/UFO subfamily. As to quaternary structure, interacts (upon activation) with TNK2; stimulates TNK2 autophosphorylation. Interacts (via N-terminus) with extracellular ligands LGALS3, TUB, TULP1 and GAS6. Interacts with VAV1 in a phosphotyrosine-independent manner. Interacts with TIMD4; this interaction enhances TIMD4-mediated efferocytosis. In terms of processing, autophosphorylated on Tyr-749, Tyr-753 and Tyr-754 in the activation loop allowing full activity. Autophosphorylated on Tyr-872 leading to recruitment of downstream partners of the signaling cascade such as PLCG2. As to expression, not expressed in normal B- and T-lymphocytes but is expressed in numerous neoplastic B- and T-cell lines. Highly expressed in testis, ovary, prostate, lung, and kidney, with lower expression in spleen, small intestine, colon, and liver.

Its subcellular location is the cell membrane. The enzyme catalyses L-tyrosyl-[protein] + ATP = O-phospho-L-tyrosyl-[protein] + ADP + H(+). Its function is as follows. Receptor tyrosine kinase that transduces signals from the extracellular matrix into the cytoplasm by binding to several ligands including LGALS3, TUB, TULP1 or GAS6. Regulates many physiological processes including cell survival, migration, differentiation, and phagocytosis of apoptotic cells (efferocytosis). Ligand binding at the cell surface induces autophosphorylation of MERTK on its intracellular domain that provides docking sites for downstream signaling molecules. Following activation by ligand, interacts with GRB2 or PLCG2 and induces phosphorylation of MAPK1, MAPK2, FAK/PTK2 or RAC1. MERTK signaling plays a role in various processes such as macrophage clearance of apoptotic cells, platelet aggregation, cytoskeleton reorganization and engulfment. Functions in the retinal pigment epithelium (RPE) as a regulator of rod outer segments fragments phagocytosis. Also plays an important role in inhibition of Toll-like receptors (TLRs)-mediated innate immune response by activating STAT1, which selectively induces production of suppressors of cytokine signaling SOCS1 and SOCS3. This Homo sapiens (Human) protein is Tyrosine-protein kinase Mer (MERTK).